A 236-amino-acid polypeptide reads, in one-letter code: Geranylgeranylglyceryl phosphate synthase (236 aa).

Residue Lys13 participates in sn-glycerol 1-phosphate binding. 2 residues coordinate Mg(2+): Asp15 and Thr42. Residues 161–166, Gly191, and 211–212 each bind sn-glycerol 1-phosphate; these read YVEYSG and GD.

The protein belongs to the GGGP/HepGP synthase family. Group I subfamily. The cofactor is Mg(2+).

It localises to the cytoplasm. The catalysed reaction is sn-glycerol 1-phosphate + (2E,6E,10E)-geranylgeranyl diphosphate = sn-3-O-(geranylgeranyl)glycerol 1-phosphate + diphosphate. Its pathway is membrane lipid metabolism; glycerophospholipid metabolism. Prenyltransferase that catalyzes the transfer of the geranylgeranyl moiety of geranylgeranyl diphosphate (GGPP) to the C3 hydroxyl of sn-glycerol-1-phosphate (G1P). This reaction is the first ether-bond-formation step in the biosynthesis of archaeal membrane lipids. The polypeptide is Geranylgeranylglyceryl phosphate synthase (Halobacterium salinarum (strain ATCC 700922 / JCM 11081 / NRC-1) (Halobacterium halobium)).